The chain runs to 692 residues: Proprotein convertase subtilisin/kexin type 9 (692 aa).

An N-terminal signal peptide occupies residues 1–30 (MGTVSSRRSWWPLPLPLLLLLLLGPAGARA). The propeptide occupies 31–152 (QEDEDGDYEE…IEEDSSVFAQ (122 aa)). Y38 carries the sulfotyrosine modification. Residue S47 is modified to Phosphoserine. In terms of domain architecture, Inhibitor I9 spans 77–149 (TYVVVLKEET…VDYIEEDSSV (73 aa)). One can recognise a Peptidase S8 domain in the interval 155-444 (PWNLERITPA…VLTPNLVAAL (290 aa)). Residues D186 and H226 each act as charge relay system in the active site. 2 disulfides stabilise this stretch: C223-C255 and C323-C358. Catalysis depends on S386, which acts as the Charge relay system. The tract at residues 450–692 (RAGWQLFCRT…HLVQASQELQ (243 aa)) is C-terminal domain. 3 disulfide bridges follow: C457-C527, C477-C526, and C486-C509. N533 carries N-linked (GlcNAc...) asparagine glycosylation. Cystine bridges form between C534-C601, C552-C600, C562-C588, C608-C679, C626-C678, and C635-C654. At S688 the chain carries Phosphoserine.

The protein belongs to the peptidase S8 family. Monomer. Can self-associate to form dimers and higher multimers which may have increased LDLR degrading activity. The precursor protein but not the mature protein may form multimers. Interacts with APOB, VLDLR, LRP8/APOER2 and BACE1. The full-length immature form (pro-PCSK9) interacts with SCNN1A, SCNN1B and SCNN1G. The pro-PCSK9 form (via C-terminal domain) interacts with LDLR. Interacts (via the C-terminal domain) with ANXA2 (via repeat Annexin 1); the interaction inhibits the degradation of LDLR. Ca(2+) serves as cofactor. Cleavage by furin and PCSK5 generates a truncated inactive protein that is unable to induce LDLR degradation. In terms of processing, undergoes autocatalytic cleavage in the endoplasmic reticulum to release the propeptide from the N-terminus and the cleavage of the propeptide is strictly required for its maturation and activation. The cleaved propeptide however remains associated with the catalytic domain through non-covalent interactions, preventing potential substrates from accessing its active site. As a result, it is secreted from cells as a propeptide-containing, enzymatically inactive protein. Post-translationally, phosphorylation protects the propeptide against proteolysis.

The protein resides in the cytoplasm. The protein localises to the secreted. It is found in the endosome. It localises to the lysosome. Its subcellular location is the cell surface. The protein resides in the endoplasmic reticulum. The protein localises to the golgi apparatus. Its proteolytic activity is autoinhibited by the non-covalent binding of the propeptide to the catalytic domain. Inhibited by EGTA. Its function is as follows. Crucial player in the regulation of plasma cholesterol homeostasis. Binds to low-density lipid receptor family members: low density lipoprotein receptor (LDLR), very low density lipoprotein receptor (VLDLR), apolipoprotein E receptor (LRP1/APOER) and apolipoprotein receptor 2 (LRP8/APOER2), and promotes their degradation in intracellular acidic compartments. Acts via a non-proteolytic mechanism to enhance the degradation of the hepatic LDLR through a clathrin LDLRAP1/ARH-mediated pathway. May prevent the recycling of LDLR from endosomes to the cell surface or direct it to lysosomes for degradation. Can induce ubiquitination of LDLR leading to its subsequent degradation. Inhibits intracellular degradation of APOB via the autophagosome/lysosome pathway in a LDLR-independent manner. Involved in the disposal of non-acetylated intermediates of BACE1 in the early secretory pathway. Inhibits epithelial Na(+) channel (ENaC)-mediated Na(+) absorption by reducing ENaC surface expression primarily by increasing its proteasomal degradation. Regulates neuronal apoptosis via modulation of LRP8/APOER2 levels and related anti-apoptotic signaling pathways. The polypeptide is Proprotein convertase subtilisin/kexin type 9 (PCSK9) (Macaca mulatta (Rhesus macaque)).